Consider the following 172-residue polypeptide: Shikimate kinase (172 aa).

Residue 11–16 coordinates ATP; sequence GSGKTT. Thr-15 contacts Mg(2+). Residues Asp-33, Arg-57, and Gly-79 each contribute to the substrate site. Arg-117 serves as a coordination point for ATP. Arg-136 provides a ligand contact to substrate.

It belongs to the shikimate kinase family. As to quaternary structure, monomer. Mg(2+) serves as cofactor.

The protein localises to the cytoplasm. The catalysed reaction is shikimate + ATP = 3-phosphoshikimate + ADP + H(+). Its pathway is metabolic intermediate biosynthesis; chorismate biosynthesis; chorismate from D-erythrose 4-phosphate and phosphoenolpyruvate: step 5/7. In terms of biological role, catalyzes the specific phosphorylation of the 3-hydroxyl group of shikimic acid using ATP as a cosubstrate. The chain is Shikimate kinase from Caldicellulosiruptor saccharolyticus (strain ATCC 43494 / DSM 8903 / Tp8T 6331).